Here is a 310-residue protein sequence, read N- to C-terminus: Methionyl-tRNA formyltransferase (310 aa).

Serine 114–proline 117 lines the (6S)-5,6,7,8-tetrahydrofolate pocket.

It belongs to the Fmt family.

It catalyses the reaction L-methionyl-tRNA(fMet) + (6R)-10-formyltetrahydrofolate = N-formyl-L-methionyl-tRNA(fMet) + (6S)-5,6,7,8-tetrahydrofolate + H(+). Attaches a formyl group to the free amino group of methionyl-tRNA(fMet). The formyl group appears to play a dual role in the initiator identity of N-formylmethionyl-tRNA by promoting its recognition by IF2 and preventing the misappropriation of this tRNA by the elongation apparatus. This chain is Methionyl-tRNA formyltransferase, found in Granulibacter bethesdensis (strain ATCC BAA-1260 / CGDNIH1).